A 199-amino-acid polypeptide reads, in one-letter code: Large ribosomal subunit protein bL9 (199 aa).

The tract at residues 153–199 is disordered; the sequence is KPVKASEKKGRRPRRDEEASDEQILAEENSVTEEAVSEEIQNSESEN.

Belongs to the bacterial ribosomal protein bL9 family.

Its function is as follows. Binds to the 23S rRNA. This chain is Large ribosomal subunit protein bL9, found in Treponema denticola (strain ATCC 35405 / DSM 14222 / CIP 103919 / JCM 8153 / KCTC 15104).